Reading from the N-terminus, the 340-residue chain is DNA-directed RNA polymerase subunit alpha (340 aa).

Positions methionine 1 to glutamate 236 are alpha N-terminal domain (alpha-NTD). The alpha C-terminal domain (alpha-CTD) stretch occupies residues phenylalanine 251 to asparagine 340.

It belongs to the RNA polymerase alpha chain family. Homodimer. The RNAP catalytic core consists of 2 alpha, 1 beta, 1 beta' and 1 omega subunit. When a sigma factor is associated with the core the holoenzyme is formed, which can initiate transcription.

The catalysed reaction is RNA(n) + a ribonucleoside 5'-triphosphate = RNA(n+1) + diphosphate. Its function is as follows. DNA-dependent RNA polymerase catalyzes the transcription of DNA into RNA using the four ribonucleoside triphosphates as substrates. The chain is DNA-directed RNA polymerase subunit alpha from Rickettsia conorii (strain ATCC VR-613 / Malish 7).